We begin with the raw amino-acid sequence, 429 residues long: Glutamate-1-semialdehyde 2,1-aminomutase 1 (429 aa).

At lysine 267 the chain carries N6-(pyridoxal phosphate)lysine.

This sequence belongs to the class-III pyridoxal-phosphate-dependent aminotransferase family. HemL subfamily. Homodimer. Pyridoxal 5'-phosphate serves as cofactor.

Its subcellular location is the cytoplasm. It carries out the reaction (S)-4-amino-5-oxopentanoate = 5-aminolevulinate. The protein operates within porphyrin-containing compound metabolism; protoporphyrin-IX biosynthesis; 5-aminolevulinate from L-glutamyl-tRNA(Glu): step 2/2. The protein is Glutamate-1-semialdehyde 2,1-aminomutase 1 of Staphylococcus carnosus (strain TM300).